We begin with the raw amino-acid sequence, 1331 residues long: DNA-directed RNA polymerase subunit beta' (1331 aa).

4 residues coordinate Zn(2+): cysteine 60, cysteine 62, cysteine 75, and cysteine 78. Mg(2+) is bound by residues aspartate 535, aspartate 537, and aspartate 539. Residues cysteine 902, cysteine 979, cysteine 986, and cysteine 989 each coordinate Zn(2+).

The protein belongs to the RNA polymerase beta' chain family. The RNAP catalytic core consists of 2 alpha, 1 beta, 1 beta' and 1 omega subunit. When a sigma factor is associated with the core the holoenzyme is formed, which can initiate transcription. Requires Mg(2+) as cofactor. Zn(2+) is required as a cofactor.

The enzyme catalyses RNA(n) + a ribonucleoside 5'-triphosphate = RNA(n+1) + diphosphate. Functionally, DNA-dependent RNA polymerase catalyzes the transcription of DNA into RNA using the four ribonucleoside triphosphates as substrates. In Corynebacterium aurimucosum (strain ATCC 700975 / DSM 44827 / CIP 107346 / CN-1) (Corynebacterium nigricans), this protein is DNA-directed RNA polymerase subunit beta'.